A 490-amino-acid chain; its full sequence is MTMKGGVASQDFSAAIATACEPAANVWSKVCVALKRELGDAAFGSWIAPAMLREAATGDVVLVTSTGIARDWIRRSAWRRIGELWAAHDATGRRIDLKSRLEFEAAAGAYVEATPKAVAAEPIEIVLPVSTDAPTVVAPSAKSPRTQGLQERFTFETFVPGPANEFAHAVARRIANWADGHFNPVLFHGPYGFGKTHLLNALAWEAMRNAPEKRVVYLTAERFLSTFVRAVMDRQTAAFKEELRAADLLIIDDVHFIAGKQSTQEELFHTLTALVGEGGRVVFSADRPPSAMTEMDAHLRSHLSAGLVCGLEPADRNLRLGILERKIQTLGAAHGFEPSIRPEVMQFLADRFTDSVRELEGALNTLSARAGEGLSRMTLDEVQAILRPHLRSGEKRITIDDIQKATAEHYGMKQADLLSERRNRAVARPRQAAMWLAKQLTTRSLPDIGRRFGGRDHTTVLHAVRRIEALRAEDSALSHDLETLTRKLRG.

Positions 1-91 (MTMKGGVASQ…GELWAAHDAT (91 aa)) are domain I, interacts with DnaA modulators. The domain II stretch occupies residues 91 to 147 (TGRRIDLKSRLEFEAAAGAYVEATPKAVAAEPIEIVLPVSTDAPTVVAPSAKSPRTQ). The segment at 148-370 (GLQERFTFET…GALNTLSARA (223 aa)) is domain III, AAA+ region. Residues G192, G194, K195, and T196 each coordinate ATP. Positions 371–490 (GEGLSRMTLD…LETLTRKLRG (120 aa)) are domain IV, binds dsDNA.

It belongs to the DnaA family. As to quaternary structure, oligomerizes as a right-handed, spiral filament on DNA at oriC.

The protein localises to the cytoplasm. Its function is as follows. Plays an essential role in the initiation and regulation of chromosomal replication. ATP-DnaA binds to the origin of replication (oriC) to initiate formation of the DNA replication initiation complex once per cell cycle. Binds the DnaA box (a 9 base pair repeat at the origin) and separates the double-stranded (ds)DNA. Forms a right-handed helical filament on oriC DNA; dsDNA binds to the exterior of the filament while single-stranded (ss)DNA is stabiized in the filament's interior. The ATP-DnaA-oriC complex binds and stabilizes one strand of the AT-rich DNA unwinding element (DUE), permitting loading of DNA polymerase. After initiation quickly degrades to an ADP-DnaA complex that is not apt for DNA replication. Binds acidic phospholipids. The polypeptide is Chromosomal replication initiator protein DnaA (Caulobacter vibrioides (strain ATCC 19089 / CIP 103742 / CB 15) (Caulobacter crescentus)).